Here is an 833-residue protein sequence, read N- to C-terminus: DNA gyrase subunit A (833 aa).

A Topo IIA-type catalytic domain is found at 34-500 (LPDVRDGLKP…AGDVRDIEDI (467 aa)). Tyr122 acts as the O-(5'-phospho-DNA)-tyrosine intermediate in catalysis. Positions 527 to 533 (QKRGGQG) match the GyrA-box motif.

The protein belongs to the type II topoisomerase GyrA/ParC subunit family. In terms of assembly, heterotetramer, composed of two GyrA and two GyrB chains. In the heterotetramer, GyrA contains the active site tyrosine that forms a transient covalent intermediate with DNA, while GyrB binds cofactors and catalyzes ATP hydrolysis.

It localises to the cytoplasm. The catalysed reaction is ATP-dependent breakage, passage and rejoining of double-stranded DNA.. Functionally, a type II topoisomerase that negatively supercoils closed circular double-stranded (ds) DNA in an ATP-dependent manner to modulate DNA topology and maintain chromosomes in an underwound state. Negative supercoiling favors strand separation, and DNA replication, transcription, recombination and repair, all of which involve strand separation. Also able to catalyze the interconversion of other topological isomers of dsDNA rings, including catenanes and knotted rings. Type II topoisomerases break and join 2 DNA strands simultaneously in an ATP-dependent manner. The polypeptide is DNA gyrase subunit A (Chlamydia muridarum (strain MoPn / Nigg)).